The sequence spans 954 residues: Glycine dehydrogenase (decarboxylating) (954 aa).

Position 702 is an N6-(pyridoxal phosphate)lysine (Lys702).

Belongs to the GcvP family. As to quaternary structure, the glycine cleavage system is composed of four proteins: P, T, L and H. Requires pyridoxal 5'-phosphate as cofactor.

It carries out the reaction N(6)-[(R)-lipoyl]-L-lysyl-[glycine-cleavage complex H protein] + glycine + H(+) = N(6)-[(R)-S(8)-aminomethyldihydrolipoyl]-L-lysyl-[glycine-cleavage complex H protein] + CO2. Its function is as follows. The glycine cleavage system catalyzes the degradation of glycine. The P protein binds the alpha-amino group of glycine through its pyridoxal phosphate cofactor; CO(2) is released and the remaining methylamine moiety is then transferred to the lipoamide cofactor of the H protein. This is Glycine dehydrogenase (decarboxylating) from Xanthomonas euvesicatoria pv. vesicatoria (strain 85-10) (Xanthomonas campestris pv. vesicatoria).